We begin with the raw amino-acid sequence, 235 residues long: MTKRVLVKFSGEALAGKEGYGIDTKILKFIASEIKALVDAGMEVAIVVGGGNIIRGVSAAADGIIKRTSGDYMGMLATVINGVAIQEALEHIGLEARLQSAIDMHEIGEAFIIRRARRHLEKGRVVIFAGGTGNPYFTTDTAATLRASEIEAELLIKATKVDGVYDKDPNKFDDAVKLDTLTYEQALTKDIKVMDDTSIALARENSLPIVVCNMFEEGNLLAIMKGDMSLCSIVK.

8-11 (KFSG) provides a ligand contact to ATP. The involved in allosteric activation by GTP stretch occupies residues 16 to 21 (GKEGYG). A UMP-binding site is contributed by G50. G51 and R55 together coordinate ATP. UMP-binding positions include D71 and 132–139 (TGNPYFTT). ATP contacts are provided by T159, Y165, and D168.

Belongs to the UMP kinase family. In terms of assembly, homohexamer.

Its subcellular location is the cytoplasm. The catalysed reaction is UMP + ATP = UDP + ADP. It functions in the pathway pyrimidine metabolism; CTP biosynthesis via de novo pathway; UDP from UMP (UMPK route): step 1/1. Allosterically activated by GTP. Inhibited by UTP. Catalyzes the reversible phosphorylation of UMP to UDP. In Sulfurovum sp. (strain NBC37-1), this protein is Uridylate kinase.